The sequence spans 129 residues: Small ribosomal subunit protein uS11 (129 aa).

It belongs to the universal ribosomal protein uS11 family. Part of the 30S ribosomal subunit. Interacts with proteins S7 and S18. Binds to IF-3.

Functionally, located on the platform of the 30S subunit, it bridges several disparate RNA helices of the 16S rRNA. Forms part of the Shine-Dalgarno cleft in the 70S ribosome. This chain is Small ribosomal subunit protein uS11, found in Bartonella bacilliformis (strain ATCC 35685 / KC583 / Herrer 020/F12,63).